Here is a 311-residue protein sequence, read N- to C-terminus: Ribosomal RNA small subunit methyltransferase H (311 aa).

Residues 33–35, D53, F77, D98, and Q105 contribute to the S-adenosyl-L-methionine site; that span reads GGH.

The protein belongs to the methyltransferase superfamily. RsmH family.

The protein localises to the cytoplasm. It catalyses the reaction cytidine(1402) in 16S rRNA + S-adenosyl-L-methionine = N(4)-methylcytidine(1402) in 16S rRNA + S-adenosyl-L-homocysteine + H(+). In terms of biological role, specifically methylates the N4 position of cytidine in position 1402 (C1402) of 16S rRNA. The chain is Ribosomal RNA small subunit methyltransferase H from Thiobacillus denitrificans (strain ATCC 25259 / T1).